The chain runs to 386 residues: Putative prophage major tail sheath protein (386 aa).

It belongs to the myoviridae tail sheath protein family.

The protein localises to the secreted. In Pseudomonas aeruginosa (strain UCBPP-PA14), this protein is Putative prophage major tail sheath protein.